The primary structure comprises 181 residues: ATP-dependent protease subunit ClpQ (181 aa).

Serine 2 is a catalytic residue. 3 residues coordinate Na(+): glycine 165, cysteine 168, and threonine 171.

The protein belongs to the peptidase T1B family. HslV subfamily. In terms of assembly, a double ring-shaped homohexamer of ClpQ is capped on each side by a ring-shaped ClpY homohexamer. The assembly of the ClpQ/ClpY complex is dependent on binding of ATP.

The protein resides in the cytoplasm. Its function is as follows. Protease subunit of a proteasome-like degradation complex. The protein is ATP-dependent protease subunit ClpQ (clpQ) of Bacillus licheniformis (strain ATCC 14580 / DSM 13 / JCM 2505 / CCUG 7422 / NBRC 12200 / NCIMB 9375 / NCTC 10341 / NRRL NRS-1264 / Gibson 46).